An 837-amino-acid chain; its full sequence is Striatin-interacting protein 1 (837 aa).

Position 1 is an N-acetylmethionine (M1). Disordered regions lie at residues 1–67 (MEPA…ESPD) and 333–423 (AASP…KGLP). The segment covering 18–35 (PQPPPPPPPATAQPPPGA) has biased composition (pro residues). The segment covering 36 to 46 (PRAAAGLLPGG) has biased composition (low complexity). The segment covering 47–60 (KAREFNRNQRKDSE) has biased composition (basic and acidic residues). A phosphoserine mark is found at S59, S335, and S339. Low complexity predominate over residues 333-343 (AASPPASASDS). Residues 356 to 377 (KALIKQDNLDAFNERDPYKADD) are compositionally biased toward basic and acidic residues. A compositionally biased stretch (acidic residues) spans 378–391 (SREEEEENDDDNSL). S788 is subject to Phosphoserine. Residues 796–837 (DNCLQSVLGQRVDLPEDFQMNYDLWLEREVFSKPISWEELLQ) are required for STRIPAK core complex formation.

It belongs to the STRIP family. In terms of assembly, part of the core of STRIPAK complexes composed of PP2A catalytic and scaffolding subunits, the striatins (PP2A regulatory subunits), the striatin-associated proteins MOB4, STRIP1 and STRIP2, PDCD10 and members of the STE20 kinases, such as STK24 and STK26. The STRIPAK complex can be extended by adapter proteins such as SLMAP:SIKE1, CTTNBP2 or CTTNBP2NL. Interacts with CDC42BPB. Interacts with CTTNBP2NL.

Its subcellular location is the cytoplasm. In terms of biological role, plays a role in the regulation of cell morphology and cytoskeletal organization. Required in the cortical actin filament dynamics and cell shape. Part of the striatin-interacting phosphatase and kinase (STRIPAK) complexes. STRIPAK complexes have critical roles in protein (de)phosphorylation and are regulators of multiple signaling pathways including Hippo, MAPK, nuclear receptor and cytoskeleton remodeling. Different types of STRIPAK complexes are involved in a variety of biological processes such as cell growth, differentiation, apoptosis, metabolism and immune regulation. The protein is Striatin-interacting protein 1 (STRIP1) of Pongo abelii (Sumatran orangutan).